The chain runs to 184 residues: GTP cyclohydrolase 1 (184 aa).

Cys75, His78, and Cys146 together coordinate Zn(2+).

Belongs to the GTP cyclohydrolase I family. In terms of assembly, toroid-shaped homodecamer, composed of two pentamers of five dimers.

The catalysed reaction is GTP + H2O = 7,8-dihydroneopterin 3'-triphosphate + formate + H(+). It participates in cofactor biosynthesis; 7,8-dihydroneopterin triphosphate biosynthesis; 7,8-dihydroneopterin triphosphate from GTP: step 1/1. This is GTP cyclohydrolase 1 from Streptococcus sanguinis (strain SK36).